A 329-amino-acid polypeptide reads, in one-letter code: 4-hydroxythreonine-4-phosphate dehydrogenase (329 aa).

Substrate is bound by residues His136 and Thr137. Residues His166, His211, and His266 each coordinate a divalent metal cation. Residues Lys274, Asn283, and Arg292 each coordinate substrate.

Belongs to the PdxA family. Homodimer. Zn(2+) is required as a cofactor. Mg(2+) serves as cofactor. It depends on Co(2+) as a cofactor.

The protein resides in the cytoplasm. It carries out the reaction 4-(phosphooxy)-L-threonine + NAD(+) = 3-amino-2-oxopropyl phosphate + CO2 + NADH. It participates in cofactor biosynthesis; pyridoxine 5'-phosphate biosynthesis; pyridoxine 5'-phosphate from D-erythrose 4-phosphate: step 4/5. Functionally, catalyzes the NAD(P)-dependent oxidation of 4-(phosphooxy)-L-threonine (HTP) into 2-amino-3-oxo-4-(phosphooxy)butyric acid which spontaneously decarboxylates to form 3-amino-2-oxopropyl phosphate (AHAP). The chain is 4-hydroxythreonine-4-phosphate dehydrogenase from Salmonella arizonae (strain ATCC BAA-731 / CDC346-86 / RSK2980).